The following is a 272-amino-acid chain: Cell division protein FtsQ (272 aa).

The Cytoplasmic portion of the chain corresponds to 1-43 (MEYNPPNTRERIVARRQRMRRNSTEPVVPGWRWRLREGLRSGR). The chain crosses the membrane as a helical span at residues 44 to 64 (IVSGIVFVISCFALFYVLFSS). Residues 65–272 (RFRVQTVEVV…FYQYRPDGSS (208 aa)) are Extracellular-facing. Positions 66–133 (FRVQTVEVVG…DRARIVIVER (68 aa)) constitute a POTRA domain.

The protein belongs to the FtsQ/DivIB family. FtsQ subfamily.

It localises to the cell membrane. Its function is as follows. Essential cell division protein. This Chloroflexus aurantiacus (strain ATCC 29366 / DSM 635 / J-10-fl) protein is Cell division protein FtsQ.